Here is a 243-residue protein sequence, read N- to C-terminus: Amphiregulin (243 aa).

The signal sequence occupies residues 1–24; the sequence is MRTPSLSLALSVLSLLVLGSGHYA. Positions 25–96 are excised as a propeptide; that stretch reads AGLELNGTSS…IVDDSVRVEQ (72 aa). An N-linked (GlcNAc...) asparagine glycan is attached at N30. Polar residues predominate over residues 55 to 67; sequence STISEMPSGSELS. Disordered stretches follow at residues 55–75 and 98–135; these read STIS…DYSE and IKPK…KKKN. The span at 98–113 shows a compositional bias: basic and acidic residues; it reads IKPKENKTEGEKSSEK. N-linked (GlcNAc...) asparagine glycosylation occurs at N103. Residues 114-135 show a composition bias toward basic residues; sequence PKRKKKGGKGGKGRRNRKKKKN. In terms of domain architecture, EGF-like spans 133 to 173; the sequence is KKNPCAAKFQNFCIHGECRYIENLEVVTCHCHQDYFGERCG. 3 cysteine pairs are disulfide-bonded: C137–C150, C145–C161, and C163–C172. Residues 190 to 213 traverse the membrane as a helical segment; that stretch reads IALAAIIVFVSAVSVAAIGIITAV. N236 carries an N-linked (GlcNAc...) asparagine glycan.

Belongs to the amphiregulin family. The immature precursor interacts with CNIH.

It is found in the membrane. In terms of biological role, ligand of the EGF receptor/EGFR. Autocrine growth factor as well as a mitogen for a broad range of target cells including astrocytes, Schwann cells and fibroblasts. In Rattus norvegicus (Rat), this protein is Amphiregulin (Areg).